We begin with the raw amino-acid sequence, 179 residues long: Small ribosomal subunit protein eS10x (179 aa).

A disordered region spans residues 90–179 (TLKKSAKPGG…AAAPSGSGLP (90 aa)). The segment covering 108–129 (DRSRGPRHEGGDRPRFGDRDGY) has biased composition (basic and acidic residues). Residues 134-144 (RAGGEFGGEKG) are compositionally biased toward gly residues. Residues 145–156 (GAPADYQPSFQG) show a composition bias toward low complexity. Positions 157–167 (SGRGFGRGAGG) are enriched in gly residues. A compositionally biased stretch (low complexity) spans 168–179 (YSAAAPSGSGLP).

Belongs to the eukaryotic ribosomal protein eS10 family.

The protein localises to the cytoplasm. The chain is Small ribosomal subunit protein eS10x (RPS10C) from Arabidopsis thaliana (Mouse-ear cress).